We begin with the raw amino-acid sequence, 35 residues long: MFDDQDLGFFANFLGIFIFIMVIAYHFVVAEPKFE.

At 1–8 (MFDDQDLG) the chain is on the lumenal side. The helical transmembrane segment at 9 to 29 (FFANFLGIFIFIMVIAYHFVV) threads the bilayer. Topologically, residues 30–35 (AEPKFE) are cytoplasmic.

Belongs to the OST4 family. Component of the oligosaccharyltransferase (OST) complex.

It is found in the endoplasmic reticulum membrane. Functionally, subunit of the oligosaccharyl transferase (OST) complex that catalyzes the initial transfer of a defined glycan (Glc(3)Man(9)GlcNAc(2) in eukaryotes) from the lipid carrier dolichol-pyrophosphate to an asparagine residue within an Asn-X-Ser/Thr consensus motif in nascent polypeptide chains, the first step in protein N-glycosylation. N-glycosylation occurs cotranslationally and the complex associates with the Sec61 complex at the channel-forming translocon complex that mediates protein translocation across the endoplasmic reticulum (ER). All subunits are required for a maximal enzyme activity. The sequence is that of Dolichyl-diphosphooligosaccharide--protein glycosyltransferase subunit 4B (OST4B) from Arabidopsis thaliana (Mouse-ear cress).